The primary structure comprises 508 residues: Photosystem II CP47 reaction center protein (508 aa).

Transmembrane regions (helical) follow at residues 21–36, 101–115, 140–156, 203–218, 237–252, and 457–472; these read AVHIMHTALVSGWAGS, IVFSGLCFLAAIWHW, GIHLFLSGAACFGFGAF, IAAGILGILAGLFHLS, VLSSSIAAVFFAAFIV, and TFALLFFFGHIWHGAR.

It belongs to the PsbB/PsbC family. PsbB subfamily. As to quaternary structure, PSII is composed of 1 copy each of membrane proteins PsbA, PsbB, PsbC, PsbD, PsbE, PsbF, PsbH, PsbI, PsbJ, PsbK, PsbL, PsbM, PsbT, PsbX, PsbY, PsbZ, Psb30/Ycf12, at least 3 peripheral proteins of the oxygen-evolving complex and a large number of cofactors. It forms dimeric complexes. The cofactor is Binds multiple chlorophylls. PSII binds additional chlorophylls, carotenoids and specific lipids..

The protein localises to the plastid. It localises to the chloroplast thylakoid membrane. In terms of biological role, one of the components of the core complex of photosystem II (PSII). It binds chlorophyll and helps catalyze the primary light-induced photochemical processes of PSII. PSII is a light-driven water:plastoquinone oxidoreductase, using light energy to abstract electrons from H(2)O, generating O(2) and a proton gradient subsequently used for ATP formation. The chain is Photosystem II CP47 reaction center protein from Cryptomeria japonica (Japanese cedar).